The primary structure comprises 1054 residues: Trehalose synthase complex regulatory subunit TPS3 (1054 aa).

The disordered stretch occupies residues 112-133; that stretch reads AANSGIPPANNPVSSGSTAQRP. Residues 122–132 are compositionally biased toward polar residues; it reads NPVSSGSTAQR. A phosphoserine mark is found at Ser148, Ser150, and Ser181. Disordered stretches follow at residues 155 to 203 and 223 to 250; these read ASSI…PVSK and QQQA…SSSN. Polar residues predominate over residues 170–182; sequence LSSSLMKNPNLSF. The segment covering 235–249 has biased composition (low complexity); it reads SGSTAGDSSIASSSS. At Thr265 the chain carries Phosphothreonine. Phosphoserine occurs at positions 267 and 273. The segment at 287 to 778 is glycosyltransferase; it reads KFGGYSNNAK…SNQETSTVFN (492 aa). Ser960 is modified (phosphoserine).

The protein in the N-terminal section; belongs to the glycosyltransferase 20 family. The trehalose synthase complex is composed of the two catalytic subunits TPS1 and TPS2 and at least one of the two regulatory subunits TPS3 or TSL1.

The protein localises to the cytoplasm. In terms of biological role, regulatory subunit of the trehalose synthase complex that catalyzes the production of trehalose from glucose-6-phosphate and UDP-glucose in a two step process. May stabilize the trehalose synthase complex. The protein is Trehalose synthase complex regulatory subunit TPS3 (TPS3) of Saccharomyces cerevisiae (strain ATCC 204508 / S288c) (Baker's yeast).